A 572-amino-acid polypeptide reads, in one-letter code: Proline--tRNA ligase (572 aa).

This sequence belongs to the class-II aminoacyl-tRNA synthetase family. ProS type 1 subfamily. In terms of assembly, homodimer.

The protein resides in the cytoplasm. It carries out the reaction tRNA(Pro) + L-proline + ATP = L-prolyl-tRNA(Pro) + AMP + diphosphate. Catalyzes the attachment of proline to tRNA(Pro) in a two-step reaction: proline is first activated by ATP to form Pro-AMP and then transferred to the acceptor end of tRNA(Pro). As ProRS can inadvertently accommodate and process non-cognate amino acids such as alanine and cysteine, to avoid such errors it has two additional distinct editing activities against alanine. One activity is designated as 'pretransfer' editing and involves the tRNA(Pro)-independent hydrolysis of activated Ala-AMP. The other activity is designated 'posttransfer' editing and involves deacylation of mischarged Ala-tRNA(Pro). The misacylated Cys-tRNA(Pro) is not edited by ProRS. The polypeptide is Proline--tRNA ligase (Haemophilus influenzae (strain PittGG)).